The following is a 263-amino-acid chain: L-aspartate dehydrogenase (263 aa).

Residues A120 and N186 each contribute to the NAD(+) site. Residue H216 is part of the active site.

The protein belongs to the L-aspartate dehydrogenase family.

It catalyses the reaction L-aspartate + NADP(+) + H2O = oxaloacetate + NH4(+) + NADPH + H(+). It carries out the reaction L-aspartate + NAD(+) + H2O = oxaloacetate + NH4(+) + NADH + H(+). The protein operates within cofactor biosynthesis; NAD(+) biosynthesis; iminoaspartate from L-aspartate (dehydrogenase route): step 1/1. Specifically catalyzes the NAD or NADP-dependent dehydrogenation of L-aspartate to iminoaspartate. This chain is L-aspartate dehydrogenase, found in Psychrobacter cryohalolentis (strain ATCC BAA-1226 / DSM 17306 / VKM B-2378 / K5).